The chain runs to 88 residues: Toxin RelE3 (88 aa).

It belongs to the RelE toxin family. In terms of assembly, forms heterodimers with RelB3 and possibly a heterotetramer RelE3-RelB3(2)-RelE3 from 2 heterodimers. The heterotetramer is probably not very stable in solution.

Functionally, toxic component of a type II toxin-antitoxin (TA) system. Has RNase activity. Is very toxic upon expression in E.coli. Its toxic activity is probably neutralized by the cognate antitoxin RelB3. The sequence is that of Toxin RelE3 (relE3) from Methanocaldococcus jannaschii (strain ATCC 43067 / DSM 2661 / JAL-1 / JCM 10045 / NBRC 100440) (Methanococcus jannaschii).